The following is a 111-amino-acid chain: Universal stress protein B (111 aa).

2 helical membrane passes run 1 to 21 (MIST…NMAR) and 90 to 110 (FILT…LLIW).

The protein belongs to the universal stress protein B family.

It localises to the cell inner membrane. This Escherichia fergusonii (strain ATCC 35469 / DSM 13698 / CCUG 18766 / IAM 14443 / JCM 21226 / LMG 7866 / NBRC 102419 / NCTC 12128 / CDC 0568-73) protein is Universal stress protein B.